The following is a 359-amino-acid chain: (2E,6E)-farnesyl diphosphate synthase (359 aa).

The tract at residues 1–21 is disordered; sequence MRGTDEKYGLPPQPDSDRMTR. Residues K73, R76, and H105 each coordinate isopentenyl diphosphate. Mg(2+)-binding residues include D112 and D116. The DDXXD motif signature appears at 112-116; that stretch reads DDLMD. A (2E)-geranyl diphosphate-binding site is contributed by R121. Position 122 (R122) interacts with isopentenyl diphosphate. Residues K201, T202, and Q239 each contribute to the (2E)-geranyl diphosphate site. The DDXXD motif motif lies at 242-246; it reads DDLLG. (2E)-geranyl diphosphate-binding residues include K256 and K266.

The protein belongs to the FPP/GGPP synthase family. The cofactor is Mg(2+).

The protein localises to the cytoplasm. The enzyme catalyses isopentenyl diphosphate + (2E)-geranyl diphosphate = (2E,6E)-farnesyl diphosphate + diphosphate. It functions in the pathway isoprenoid biosynthesis; farnesyl diphosphate biosynthesis; farnesyl diphosphate from geranyl diphosphate and isopentenyl diphosphate. Functionally, catalyzes the condensation of isopentenyl pyrophosphate (IPP) with geranyl diphosphate (GPP) to yield (2E,6E)-farnesyl diphosphate (E,E-FPP). May be used for squalene and possibly sterol biosynthesis. This chain is (2E,6E)-farnesyl diphosphate synthase, found in Mycobacterium bovis (strain ATCC BAA-935 / AF2122/97).